The sequence spans 636 residues: tRNA 5-methylaminomethyl-2-thiouridine biosynthesis bifunctional protein MnmC (636 aa).

Residues 1–202 form a tRNA (mnm(5)s(2)U34)-methyltransferase region; sequence MTVSKILKQV…ERAALRAQSH (202 aa). The segment at 227–636 is FAD-dependent cmnm(5)s(2)U34 oxidoreductase; sequence IGGGVASACL…GKALEMSGKS (410 aa).

This sequence in the N-terminal section; belongs to the methyltransferase superfamily. tRNA (mnm(5)s(2)U34)-methyltransferase family. In the C-terminal section; belongs to the DAO family. Requires FAD as cofactor.

It is found in the cytoplasm. The enzyme catalyses 5-aminomethyl-2-thiouridine(34) in tRNA + S-adenosyl-L-methionine = 5-methylaminomethyl-2-thiouridine(34) in tRNA + S-adenosyl-L-homocysteine + H(+). Catalyzes the last two steps in the biosynthesis of 5-methylaminomethyl-2-thiouridine (mnm(5)s(2)U) at the wobble position (U34) in tRNA. Catalyzes the FAD-dependent demodification of cmnm(5)s(2)U34 to nm(5)s(2)U34, followed by the transfer of a methyl group from S-adenosyl-L-methionine to nm(5)s(2)U34, to form mnm(5)s(2)U34. This is tRNA 5-methylaminomethyl-2-thiouridine biosynthesis bifunctional protein MnmC from Shewanella halifaxensis (strain HAW-EB4).